A 180-amino-acid chain; its full sequence is Fucolectin-2 (180 aa).

Positions 1-22 are cleaved as a signal peptide; it reads MKVKMIMLLFQILAILTLKSDS. The tract at residues 31-179 is F5/8 type C-like; that stretch reads QENVALRGRA…VEVNVLFPAP (149 aa). The Ca(2+) site is built by asparagine 58, aspartate 61, asparagine 63, and serine 72. Disulfide bonds link cysteine 73–cysteine 168, cysteine 104–cysteine 105, and cysteine 130–cysteine 146. Alpha-L-fucose contacts are provided by histidine 75 and arginine 101. The Cell attachment site motif lies at 101-103; the sequence is RGD. Arginine 108 serves as a coordination point for alpha-L-fucose. Residues cysteine 168 and glutamate 169 each contribute to the Ca(2+) site.

This sequence belongs to the fucolectin family. As to quaternary structure, homotrimer. Parenchymal hepatocytes.

Its subcellular location is the secreted. It is found in the extracellular space. Its function is as follows. Acts as a defensive agent. Recognizes blood group fucosylated oligosaccharides including A, B, H and Lewis B-type antigens. Does not recognize Lewis A antigen and has low affinity for monovalent haptens. The polypeptide is Fucolectin-2 (Anguilla japonica (Japanese eel)).